Consider the following 107-residue polypeptide: Pre-mRNA-splicing factor RDS3 (107 aa).

Belongs to the PHF5 family. In terms of assembly, component of the spliceosome where it interacts with CUS1, HSH49, HSH155, IST3 and RSE1. Also interacts with YRA1.

It is found in the nucleus. Its function is as follows. Required for pre-mRNA splicing. Involved in regulation of drug sensitivity and may play a role in multidrug resistance. The chain is Pre-mRNA-splicing factor RDS3 (RDS3) from Saccharomyces cerevisiae (strain ATCC 204508 / S288c) (Baker's yeast).